Reading from the N-terminus, the 388-residue chain is LL-diaminopimelate aminotransferase (388 aa).

Y13, G38, K102, Y126, and N176 together coordinate substrate. Pyridoxal 5'-phosphate contacts are provided by residues 101–102 (SK), Y126, N176, Y207, and 235–237 (SLS). K238 carries the post-translational modification N6-(pyridoxal phosphate)lysine. R246 contacts pyridoxal 5'-phosphate. R364 is a substrate binding site.

It belongs to the class-I pyridoxal-phosphate-dependent aminotransferase family. LL-diaminopimelate aminotransferase subfamily. In terms of assembly, homodimer. Pyridoxal 5'-phosphate serves as cofactor.

It carries out the reaction (2S,6S)-2,6-diaminopimelate + 2-oxoglutarate = (S)-2,3,4,5-tetrahydrodipicolinate + L-glutamate + H2O + H(+). It functions in the pathway amino-acid biosynthesis; L-lysine biosynthesis via DAP pathway; LL-2,6-diaminopimelate from (S)-tetrahydrodipicolinate (aminotransferase route): step 1/1. Functionally, involved in the synthesis of meso-diaminopimelate (m-DAP or DL-DAP), required for both lysine and peptidoglycan biosynthesis. Catalyzes the direct conversion of tetrahydrodipicolinate to LL-diaminopimelate. The protein is LL-diaminopimelate aminotransferase of Dehalococcoides mccartyi (strain ATCC BAA-2266 / KCTC 15142 / 195) (Dehalococcoides ethenogenes (strain 195)).